A 46-amino-acid polypeptide reads, in one-letter code: Protein PsbN (46 aa).

A helical membrane pass occupies residues 5 to 27 (TLVTLFVSGLLMSFTGYALYTAF).

Belongs to the PsbN family.

It is found in the plastid membrane. May play a role in photosystem I and II biogenesis. The protein is Protein PsbN of Cuscuta obtusiflora (Peruvian dodder).